Reading from the N-terminus, the 1066-residue chain is Protein sts5 (1066 aa).

Positions 18–28 (QQDPSDAQSSP) are enriched in low complexity. Disordered regions lie at residues 18–40 (QQDP…SLTT), 154–178 (ATST…SPNS), and 247–286 (SNFR…RKNL). Positions 29 to 40 (TFVPSANPSLTT) are enriched in polar residues. Thr157 bears the Phosphothreonine mark. Low complexity predominate over residues 168-178 (HSVASVSSPNS). At Thr262 the chain carries Phosphothreonine. Ser264 is modified (phosphoserine). Residues 270–280 (SGSGFSSGGSG) show a composition bias toward gly residues. Position 377 is a phosphothreonine (Thr377). Residues 454 to 480 (SSAANKERQTSSGNQGSSNNSGNDKPK) are disordered. Positions 464 to 476 (SSGNQGSSNNSGN) are enriched in low complexity. The 75-residue stretch at 482-556 (VWFKPSDKRV…AQVSALLHDT (75 aa)) folds into the CSD2 domain. In terms of domain architecture, RNB spans 618–934 (NINSSSATDF…VHYQLQLLLR (317 aa)). Positions 983–1033 (QDGLVCFVAPSYFDVFFPSLGMEKRVHLDLLNLTHVRFEEDQGILSLYDES) constitute a DIS3L2 C-terminal domain.

It belongs to the RNR ribonuclease family. In terms of assembly, interacts with serine/threonine phosphatase ppe1, protein kinase C and an osmosensing MAP kinase.

The protein localises to the cytoplasm. Its function is as follows. Required for the maintenance of cell shape during interphase. Required for localization of cortical actin to the growing tips before mitosis. The protein is Protein sts5 (sts5) of Schizosaccharomyces pombe (strain 972 / ATCC 24843) (Fission yeast).